The primary structure comprises 283 residues: ATP phosphoribosyltransferase (283 aa).

This sequence belongs to the ATP phosphoribosyltransferase family. Long subfamily. It depends on Mg(2+) as a cofactor.

It localises to the cytoplasm. The catalysed reaction is 1-(5-phospho-beta-D-ribosyl)-ATP + diphosphate = 5-phospho-alpha-D-ribose 1-diphosphate + ATP. The protein operates within amino-acid biosynthesis; L-histidine biosynthesis; L-histidine from 5-phospho-alpha-D-ribose 1-diphosphate: step 1/9. Feedback inhibited by histidine. In terms of biological role, catalyzes the condensation of ATP and 5-phosphoribose 1-diphosphate to form N'-(5'-phosphoribosyl)-ATP (PR-ATP). Has a crucial role in the pathway because the rate of histidine biosynthesis seems to be controlled primarily by regulation of HisG enzymatic activity. This is ATP phosphoribosyltransferase from Rhodococcus opacus (strain B4).